The chain runs to 230 residues: Uracil-DNA glycosylase (230 aa).

The active-site Proton acceptor is the Asp-70.

It belongs to the uracil-DNA glycosylase (UDG) superfamily. UNG family.

It is found in the cytoplasm. The catalysed reaction is Hydrolyzes single-stranded DNA or mismatched double-stranded DNA and polynucleotides, releasing free uracil.. Excises uracil residues from the DNA which can arise as a result of misincorporation of dUMP residues by DNA polymerase or due to deamination of cytosine. The polypeptide is Uracil-DNA glycosylase (Pseudomonas syringae pv. syringae (strain B728a)).